A 304-amino-acid polypeptide reads, in one-letter code: Ribosomal RNA small subunit methyltransferase H (304 aa).

S-adenosyl-L-methionine-binding positions include 37–39 (GGH), Asp-57, Phe-85, Asp-100, and His-107.

This sequence belongs to the methyltransferase superfamily. RsmH family.

It localises to the cytoplasm. The enzyme catalyses cytidine(1402) in 16S rRNA + S-adenosyl-L-methionine = N(4)-methylcytidine(1402) in 16S rRNA + S-adenosyl-L-homocysteine + H(+). Its function is as follows. Specifically methylates the N4 position of cytidine in position 1402 (C1402) of 16S rRNA. The protein is Ribosomal RNA small subunit methyltransferase H of Azobacteroides pseudotrichonymphae genomovar. CFP2.